The following is a 670-amino-acid chain: UvrABC system protein B (670 aa).

In terms of domain architecture, Helicase ATP-binding spans 25–412; sequence EGLEAGLSHQ…AGRVIEQVVR (388 aa). 38–45 is a binding site for ATP; it reads GVTGSGKT. The Beta-hairpin signature appears at 91–114; that stretch reads YYDYYQPEAYVPSSDTYIEKDSSI. Residues 429-582 form the Helicase C-terminal domain; that stretch reads QVDDLLSQIR…QIAFNEAHGI (154 aa). The region spanning 631–666 is the UVR domain; sequence SKRIRQLEEKMYQLARDLEFEAAAQLRDEIQTLRER.

This sequence belongs to the UvrB family. Forms a heterotetramer with UvrA during the search for lesions. Interacts with UvrC in an incision complex.

It localises to the cytoplasm. Its function is as follows. The UvrABC repair system catalyzes the recognition and processing of DNA lesions. A damage recognition complex composed of 2 UvrA and 2 UvrB subunits scans DNA for abnormalities. Upon binding of the UvrA(2)B(2) complex to a putative damaged site, the DNA wraps around one UvrB monomer. DNA wrap is dependent on ATP binding by UvrB and probably causes local melting of the DNA helix, facilitating insertion of UvrB beta-hairpin between the DNA strands. Then UvrB probes one DNA strand for the presence of a lesion. If a lesion is found the UvrA subunits dissociate and the UvrB-DNA preincision complex is formed. This complex is subsequently bound by UvrC and the second UvrB is released. If no lesion is found, the DNA wraps around the other UvrB subunit that will check the other stand for damage. This chain is UvrABC system protein B, found in Pseudomonas aeruginosa (strain ATCC 15692 / DSM 22644 / CIP 104116 / JCM 14847 / LMG 12228 / 1C / PRS 101 / PAO1).